The primary structure comprises 91 residues: PqqA binding protein (91 aa).

Belongs to the PqqD family. Monomer. Interacts with PqqE.

Its pathway is cofactor biosynthesis; pyrroloquinoline quinone biosynthesis. In terms of biological role, functions as a PqqA binding protein and presents PqqA to PqqE, in the pyrroloquinoline quinone (PQQ) biosynthetic pathway. The polypeptide is PqqA binding protein (Pseudomonas fluorescens (strain SBW25)).